We begin with the raw amino-acid sequence, 184 residues long: V-type proton ATPase subunit E (184 aa).

It belongs to the V-ATPase E subunit family.

Its function is as follows. Produces ATP from ADP in the presence of a proton gradient across the membrane. In Finegoldia magna (strain ATCC 29328 / DSM 20472 / WAL 2508) (Peptostreptococcus magnus), this protein is V-type proton ATPase subunit E.